The primary structure comprises 293 residues: Elongation factor Ts (293 aa).

The involved in Mg(2+) ion dislocation from EF-Tu stretch occupies residues 79 to 82; the sequence is TDFV. Position 149 is a phosphoserine (serine 149).

Belongs to the EF-Ts family.

It is found in the cytoplasm. In terms of biological role, associates with the EF-Tu.GDP complex and induces the exchange of GDP to GTP. It remains bound to the aminoacyl-tRNA.EF-Tu.GTP complex up to the GTP hydrolysis stage on the ribosome. This is Elongation factor Ts (tsf) from Bacillus subtilis (strain 168).